The primary structure comprises 195 residues: ATP-dependent Clp protease proteolytic subunit 2 (195 aa).

The active-site Nucleophile is Ser95. The active site involves His120.

This sequence belongs to the peptidase S14 family. Fourteen ClpP subunits assemble into 2 heptameric rings which stack back to back to give a disk-like structure with a central cavity, resembling the structure of eukaryotic proteasomes.

The protein resides in the cytoplasm. It catalyses the reaction Hydrolysis of proteins to small peptides in the presence of ATP and magnesium. alpha-casein is the usual test substrate. In the absence of ATP, only oligopeptides shorter than five residues are hydrolyzed (such as succinyl-Leu-Tyr-|-NHMec, and Leu-Tyr-Leu-|-Tyr-Trp, in which cleavage of the -Tyr-|-Leu- and -Tyr-|-Trp bonds also occurs).. Cleaves peptides in various proteins in a process that requires ATP hydrolysis. Has a chymotrypsin-like activity. Plays a major role in the degradation of misfolded proteins. The chain is ATP-dependent Clp protease proteolytic subunit 2 from Methylococcus capsulatus (strain ATCC 33009 / NCIMB 11132 / Bath).